The sequence spans 357 residues: MEWLDILESHGQALLGPTAWLVLWTIVKIVVIAVPIILCVAYLTYWERKMIGWMHVRLGPTRVGFRGLLQPFADVFKLLTKEVVVPTQANKILFVVAPVVTLMPALAAWAVVPFGPEVVLANVNAGLLYVMAITSIGVYGVIVAGWASNSKYAFLGALRASAQMVSYELAIGFVLVTVLLVSGSLNMSEIVLGQTRGWFAEHGLTFLSWNWLPLLPLFVIYVISAVAETNRHPFDVVEGESEIVAGHMVEYSGMAFALFFLGEYANMILLSCMASIMFLGGWTSPIDIAPLTWIPGWIWLGIKTFCVVSLFVWFRASFPRYRYDQIMRLGWKIFIPLTGVWLVVVAIWMQTPWNIWR.

8 helical membrane passes run 20–40 (WLVL…ILCV), 92–112 (ILFV…WAVV), 127–147 (LLYV…AGWA), 165–185 (VSYE…SGSL), 206–226 (FLSW…ISAV), 254–274 (MAFA…SCMA), 294–314 (IPGW…FVWF), and 329–349 (LGWK…AIWM).

Belongs to the complex I subunit 1 family. As to quaternary structure, NDH-1 is composed of 14 different subunits. Subunits NuoA, H, J, K, L, M, N constitute the membrane sector of the complex.

The protein localises to the cell inner membrane. The enzyme catalyses a quinone + NADH + 5 H(+)(in) = a quinol + NAD(+) + 4 H(+)(out). NDH-1 shuttles electrons from NADH, via FMN and iron-sulfur (Fe-S) centers, to quinones in the respiratory chain. The immediate electron acceptor for the enzyme in this species is believed to be ubiquinone. Couples the redox reaction to proton translocation (for every two electrons transferred, four hydrogen ions are translocated across the cytoplasmic membrane), and thus conserves the redox energy in a proton gradient. This subunit may bind ubiquinone. The chain is NADH-quinone oxidoreductase subunit H from Bordetella petrii (strain ATCC BAA-461 / DSM 12804 / CCUG 43448).